A 460-amino-acid chain; its full sequence is Serine--tRNA ligase (460 aa).

Over residues 43-66 (AEGDGLRQERNEVSSKIGELKQDG) the composition is skewed to basic and acidic residues. A disordered region spans residues 43–81 (AEGDGLRQERNEVSSKIGELKQDGKDEEAQEAIDRSQEL). Position 242 to 244 (242 to 244 (TAE)) interacts with L-serine. ATP is bound by residues 273 to 275 (RRE) and Val289. Glu296 is a binding site for L-serine. Residue 369 to 372 (EVSS) coordinates ATP. Ser405 lines the L-serine pocket.

Belongs to the class-II aminoacyl-tRNA synthetase family. Type-1 seryl-tRNA synthetase subfamily. In terms of assembly, homodimer. The tRNA molecule binds across the dimer.

It is found in the cytoplasm. It catalyses the reaction tRNA(Ser) + L-serine + ATP = L-seryl-tRNA(Ser) + AMP + diphosphate + H(+). The enzyme catalyses tRNA(Sec) + L-serine + ATP = L-seryl-tRNA(Sec) + AMP + diphosphate + H(+). It functions in the pathway aminoacyl-tRNA biosynthesis; selenocysteinyl-tRNA(Sec) biosynthesis; L-seryl-tRNA(Sec) from L-serine and tRNA(Sec): step 1/1. Its function is as follows. Catalyzes the attachment of serine to tRNA(Ser). Is also probably able to aminoacylate tRNA(Sec) with serine, to form the misacylated tRNA L-seryl-tRNA(Sec), which will be further converted into selenocysteinyl-tRNA(Sec). The polypeptide is Serine--tRNA ligase (serS) (Haloarcula marismortui (strain ATCC 43049 / DSM 3752 / JCM 8966 / VKM B-1809) (Halobacterium marismortui)).